The sequence spans 304 residues: MAAFSVHILGCGSALPTTHHHPSSQVIDLRDKLYMIDCGEGVQRQFRHEKLHFGRLIHIFISHLHGDHCFGLPGFISTLGLLGRTGTLHVHGPEGIERFLSPILEQFCHRMPYQVEIHTIDASRHALVHEDKSVKVYSIPLSHRIPAVGYLFEEKCRARHLNKAAAEFYNIPLAEYPLIIEGSDYTTPDGRIIPNRHLTTPGTPPRRYAYCSDTEFCPSIVPIIQGVDLLYHEATFMEEDRARAKETFHSTAKEAAEIARQAGAKRLLIGHYSGRYKDVQGLLEEAQSVFKPTIAANERMRIDL.

Residues H63, H65, D67, H68, H143, D213, and H271 each contribute to the Zn(2+) site. D67 acts as the Proton acceptor in catalysis.

This sequence belongs to the RNase Z family. Homodimer. Zn(2+) serves as cofactor.

It catalyses the reaction Endonucleolytic cleavage of RNA, removing extra 3' nucleotides from tRNA precursor, generating 3' termini of tRNAs. A 3'-hydroxy group is left at the tRNA terminus and a 5'-phosphoryl group is left at the trailer molecule.. Its function is as follows. Zinc phosphodiesterase, which displays some tRNA 3'-processing endonuclease activity. Probably involved in tRNA maturation, by removing a 3'-trailer from precursor tRNA. This Porphyromonas gingivalis (strain ATCC BAA-308 / W83) protein is Ribonuclease Z.